A 157-amino-acid chain; its full sequence is Transcription factor HES-2 (157 aa).

A bHLH domain is found at 13 to 70 (LRKNLKPLLEKRRRARINESLSQLKGLVLPLLGAETSRSSKLEKADILEMTVRFLQEQ). The 34-residue stretch at 86 to 119 (YLEGYRACLARLARVLPACSVLEPAVSARLLEHL) folds into the Orange domain. The interval 124–157 (VSDDSPSLTLPPAPAPAPSPPVPPPGSSGLWRPW) is disordered. A compositionally biased stretch (pro residues) spans 132–149 (TLPPAPAPAPSPPVPPPG). Residues 154–157 (WRPW) carry the WRPW motif motif.

Transcription repression requires formation of a complex with a corepressor protein of the Groucho/TLE family.

The protein resides in the nucleus. Its function is as follows. Transcriptional repressor of genes that require a bHLH protein for their transcription. The sequence is that of Transcription factor HES-2 (Hes2) from Mus musculus (Mouse).